The sequence spans 174 residues: Endoribonuclease YbeY (174 aa).

Zn(2+) is bound by residues His-129, His-133, and His-139.

Belongs to the endoribonuclease YbeY family. Zn(2+) serves as cofactor.

Its subcellular location is the cytoplasm. Single strand-specific metallo-endoribonuclease involved in late-stage 70S ribosome quality control and in maturation of the 3' terminus of the 16S rRNA. The chain is Endoribonuclease YbeY from Lactobacillus helveticus (strain DPC 4571).